The chain runs to 466 residues: Ankyrin repeat and SOCS box protein 18 (466 aa).

6 ANK repeats span residues 119 to 148 (ELTTPLCIAAAHGHTACVRHLLGRGADPDA), 151 to 180 (GGRGALHEACLGGHTACVRLLLQHRADPDL), 184 to 213 (EGLAPLHLCRTAASLGCAQALLEHGASVQR), 218 to 247 (GRDTPLHVAAQRGLDEHARLYLGRGAHVDA), 251 to 288 (RGETALSAACGAARRPDEHGRCLRLCALLLRRGAEADA), and 292 to 321 (DERSPLHKACGHASHSLARLLLRHGADAGA). An SOCS box domain is found at 405-463 (QMHKPFYQSLFALALTPRCLQHLCRCALRRLFGKRCFDLIPLLPLPKPLQNYLLLEPQG).

Belongs to the ankyrin SOCS box (ASB) family.

It functions in the pathway protein modification; protein ubiquitination. Its function is as follows. May be a substrate-recognition component of a SCF-like ECS (Elongin-Cullin-SOCS-box protein) E3 ubiquitin-protein ligase complex which mediates the ubiquitination and subsequent proteasomal degradation of target proteins. This Homo sapiens (Human) protein is Ankyrin repeat and SOCS box protein 18 (ASB18).